A 950-amino-acid polypeptide reads, in one-letter code: Leucine--tRNA ligase (950 aa).

The 'HIGH' region motif lies at 42 to 52; the sequence is PYLNGNLHAGH. The 'KMSKS' region signature appears at 629–633; sequence KMSKS. Lysine 632 provides a ligand contact to ATP. The interval 928–950 is disordered; sequence NPPYDPKGRAQNAEPGRPAIYIE.

The protein belongs to the class-I aminoacyl-tRNA synthetase family.

It localises to the cytoplasm. It catalyses the reaction tRNA(Leu) + L-leucine + ATP = L-leucyl-tRNA(Leu) + AMP + diphosphate. The sequence is that of Leucine--tRNA ligase from Methanothrix thermoacetophila (strain DSM 6194 / JCM 14653 / NBRC 101360 / PT) (Methanosaeta thermophila).